We begin with the raw amino-acid sequence, 221 residues long: 2-amino-5-formylamino-6-ribosylaminopyrimidin-4(3H)-one 5'-monophosphate deformylase (221 aa).

Fe cation-binding residues include Glu29, His31, Asp40, and His108.

The protein belongs to the creatininase superfamily. FAPy deformylase family. As to quaternary structure, homodimer. Fe(2+) is required as a cofactor. Requires Zn(2+) as cofactor.

The enzyme catalyses 2-amino-5-formylamino-6-(5-phospho-D-ribosylamino)pyrimidin-4(3H)-one + H2O = 2,5-diamino-6-(1-D-ribosylamino)pyrimidin-4(3H)-one 5'-phosphate + formate + H(+). It participates in cofactor biosynthesis; coenzyme F420 biosynthesis. It functions in the pathway cofactor biosynthesis; riboflavin biosynthesis. In terms of biological role, catalyzes the hydrolysis of the formamide of 2-amino-5-formylamino-6-ribosylamino-4(3H)-pyrimidinone 5'-monophosphate (FAPy) to form 2,5-diamino-6-ribosylamino-4(3H)-pyrimidinone 5'-phosphate (APy). This is 2-amino-5-formylamino-6-ribosylaminopyrimidin-4(3H)-one 5'-monophosphate deformylase from Methanococcus maripaludis (strain DSM 14266 / JCM 13030 / NBRC 101832 / S2 / LL).